The primary structure comprises 168 residues: Protein yop-1 (168 aa).

The Cytoplasmic segment spans residues methionine 1–proline 35. The chain crosses the membrane as a helical span at residues lysine 36–leucine 55. Position 56 (glycine 56) is a topological domain, lumenal. Residues glycine 57–alanine 76 form a helical membrane-spanning segment. Over leucine 77 to threonine 86 the chain is Cytoplasmic. Residues glutamine 87 to serine 103 traverse the membrane as a helical segment. The Lumenal segment spans residues leucine 104 to isoleucine 105. The chain crosses the membrane as a helical span at residues serine 106–tryptophan 124. Residues leucine 125 to aspartate 168 are Cytoplasmic-facing.

This sequence belongs to the DP1 family. In terms of assembly, oligomer.

The protein localises to the endoplasmic reticulum membrane. The protein resides in the golgi apparatus membrane. In terms of biological role, required to generate and maintain the structure of the tubular endoplasmic reticulum network and the vacuole. Induces high curvature in membranes and causes membrane tubule formation. Involved in membrane/vesicle trafficking. This Neurospora crassa (strain ATCC 24698 / 74-OR23-1A / CBS 708.71 / DSM 1257 / FGSC 987) protein is Protein yop-1 (yop-1).